Here is a 429-residue protein sequence, read N- to C-terminus: Adenylosuccinate synthetase (429 aa).

Residues 12–18 (GDEGKGK) and 40–42 (GHT) each bind GTP. The Proton acceptor role is filled by Asp-13. Mg(2+) is bound by residues Asp-13 and Gly-40. IMP is bound by residues 13–16 (DEGK), 38–41 (NAGH), Thr-128, Arg-142, Gln-223, Thr-238, and Arg-302. The Proton donor role is filled by His-41. Position 298-304 (298-304 (TTTGRPR)) interacts with substrate. GTP contacts are provided by residues Arg-304, 330–332 (SID), and 412–414 (SVG).

Belongs to the adenylosuccinate synthetase family. Homodimer. It depends on Mg(2+) as a cofactor.

The protein resides in the cytoplasm. It catalyses the reaction IMP + L-aspartate + GTP = N(6)-(1,2-dicarboxyethyl)-AMP + GDP + phosphate + 2 H(+). It functions in the pathway purine metabolism; AMP biosynthesis via de novo pathway; AMP from IMP: step 1/2. Functionally, plays an important role in the de novo pathway of purine nucleotide biosynthesis. Catalyzes the first committed step in the biosynthesis of AMP from IMP. In Bacillus cereus (strain ATCC 14579 / DSM 31 / CCUG 7414 / JCM 2152 / NBRC 15305 / NCIMB 9373 / NCTC 2599 / NRRL B-3711), this protein is Adenylosuccinate synthetase.